A 579-amino-acid polypeptide reads, in one-letter code: Glutamine--tRNA ligase (579 aa).

A 'HIGH' region motif is present at residues 41–51; it reads PEPNGYLHIGH. Residues 42–44 and 48–54 contribute to the ATP site; these read EPN and HIGHAKA. Positions 74 and 218 each coordinate L-glutamine. Residues Thr237, 285-286, and 293-295 each bind ATP; these read RL and MSK. The 'KMSKS' region motif lies at 292 to 296; the sequence is VMSKR.

This sequence belongs to the class-I aminoacyl-tRNA synthetase family. Monomer.

It is found in the cytoplasm. It catalyses the reaction tRNA(Gln) + L-glutamine + ATP = L-glutaminyl-tRNA(Gln) + AMP + diphosphate. This Xanthomonas euvesicatoria pv. vesicatoria (strain 85-10) (Xanthomonas campestris pv. vesicatoria) protein is Glutamine--tRNA ligase.